We begin with the raw amino-acid sequence, 215 residues long: MQYNIILLVDGSLSLEQANQVNEKQQQTLTNVEGLQTEYLGLKELAYPIKKQLSAHYYRWKFSGDNQSTKDFKRTANINKQVLRELIINLEREYGYLASINPKKQQLALQKRAKYDEIIARENNPENPDVPVTSGLASTQPRLSRTEKAQKPKEELWDVVQKMGNFDSVQANPYRPRFKRFNAEHVNQRQNQQNNNNNRFDRNRNRQHNRFKDKQ.

Disordered stretches follow at residues 121 to 153 (RENNPENPDVPVTSGLASTQPRLSRTEKAQKPK) and 187 to 215 (NQRQNQQNNNNNRFDRNRNRQHNRFKDKQ). The segment covering 144–153 (SRTEKAQKPK) has biased composition (basic and acidic residues). A compositionally biased stretch (low complexity) spans 188 to 198 (QRQNQQNNNNN). Residues 199-215 (RFDRNRNRQHNRFKDKQ) are compositionally biased toward basic and acidic residues.

It belongs to the bacterial ribosomal protein bS6 family.

In terms of biological role, binds together with bS18 to 16S ribosomal RNA. This Mycoplasma pneumoniae (strain ATCC 29342 / M129 / Subtype 1) (Mycoplasmoides pneumoniae) protein is Small ribosomal subunit protein bS6 (rpsF).